The chain runs to 353 residues: Holliday junction branch migration complex subunit RuvB (353 aa).

The interval 1-183 (MSGEGLVSAA…FGFTAHMDFY (183 aa)) is large ATPase domain (RuvB-L). Residues Leu-22, Arg-23, Gly-64, Lys-67, Thr-68, Ser-69, 130–132 (EDF), Arg-173, Tyr-183, and Arg-220 each bind ATP. Residue Thr-68 coordinates Mg(2+). The tract at residues 184-254 (DAAELALVLT…VARAALRIYD (71 aa)) is small ATPAse domain (RuvB-S). The interval 257 to 353 (ALGLDRLDRA…ALFGEDLPAS (97 aa)) is head domain (RuvB-H). 2 residues coordinate DNA: Arg-312 and Arg-317.

Belongs to the RuvB family. In terms of assembly, homohexamer. Forms an RuvA(8)-RuvB(12)-Holliday junction (HJ) complex. HJ DNA is sandwiched between 2 RuvA tetramers; dsDNA enters through RuvA and exits via RuvB. An RuvB hexamer assembles on each DNA strand where it exits the tetramer. Each RuvB hexamer is contacted by two RuvA subunits (via domain III) on 2 adjacent RuvB subunits; this complex drives branch migration. In the full resolvosome a probable DNA-RuvA(4)-RuvB(12)-RuvC(2) complex forms which resolves the HJ.

It is found in the cytoplasm. It catalyses the reaction ATP + H2O = ADP + phosphate + H(+). Its function is as follows. The RuvA-RuvB-RuvC complex processes Holliday junction (HJ) DNA during genetic recombination and DNA repair, while the RuvA-RuvB complex plays an important role in the rescue of blocked DNA replication forks via replication fork reversal (RFR). RuvA specifically binds to HJ cruciform DNA, conferring on it an open structure. The RuvB hexamer acts as an ATP-dependent pump, pulling dsDNA into and through the RuvAB complex. RuvB forms 2 homohexamers on either side of HJ DNA bound by 1 or 2 RuvA tetramers; 4 subunits per hexamer contact DNA at a time. Coordinated motions by a converter formed by DNA-disengaged RuvB subunits stimulates ATP hydrolysis and nucleotide exchange. Immobilization of the converter enables RuvB to convert the ATP-contained energy into a lever motion, pulling 2 nucleotides of DNA out of the RuvA tetramer per ATP hydrolyzed, thus driving DNA branch migration. The RuvB motors rotate together with the DNA substrate, which together with the progressing nucleotide cycle form the mechanistic basis for DNA recombination by continuous HJ branch migration. Branch migration allows RuvC to scan DNA until it finds its consensus sequence, where it cleaves and resolves cruciform DNA. This is Holliday junction branch migration complex subunit RuvB from Parafrankia sp. (strain EAN1pec).